The primary structure comprises 69 residues: Ribosome modulation factor (69 aa).

The protein belongs to the ribosome modulation factor family.

It is found in the cytoplasm. Its function is as follows. During stationary phase, converts 70S ribosomes to an inactive dimeric form (100S ribosomes). This Hahella chejuensis (strain KCTC 2396) protein is Ribosome modulation factor.